We begin with the raw amino-acid sequence, 265 residues long: Mlc titration factor A (265 aa).

Residues H111, H148, H152, and E211 each contribute to the Zn(2+) site.

Belongs to the MtfA family. In terms of assembly, interacts with Mlc. It depends on Zn(2+) as a cofactor.

It is found in the cytoplasm. Its function is as follows. Involved in the modulation of the activity of the glucose-phosphotransferase system (glucose-PTS). Interacts with the transcriptional repressor Mlc, preventing its interaction with DNA and leading to the modulation of expression of genes regulated by Mlc, including ptsG, which encodes the PTS system glucose-specific EIICB component. Shows zinc-dependent metallopeptidase activity. This chain is Mlc titration factor A, found in Shigella sonnei (strain Ss046).